Consider the following 606-residue polypeptide: Armadillo repeat-containing X-linked protein 5 (606 aa).

Positions 1–85 (MIGSKTKRKA…KVKKKKDKTN (85 aa)) are disordered. The span at 15–26 (GASSKPGTNSPA) shows a compositional bias: polar residues. Over residues 40–59 (VKAEPKEEWGNQAEARDEAV) the composition is skewed to basic and acidic residues. ARM repeat units follow at residues 349-388 (CKSR…GISP), 470-509 (VKFD…CLSK), 511-551 (QANT…NINF), and 568-606 (SELI…ILKL).

This sequence belongs to the eutherian X-chromosome-specific Armcx family. Highly expressed in the developing neural tissues, neural crest derivatives and hind limbs.

This Mus musculus (Mouse) protein is Armadillo repeat-containing X-linked protein 5 (Armcx5).